Consider the following 619-residue polypeptide: Chaperone protein HscA homolog (619 aa).

It belongs to the heat shock protein 70 family.

Functionally, chaperone involved in the maturation of iron-sulfur cluster-containing proteins. Has a low intrinsic ATPase activity which is markedly stimulated by HscB. This is Chaperone protein HscA homolog from Acinetobacter baumannii (strain ATCC 17978 / DSM 105126 / CIP 53.77 / LMG 1025 / NCDC KC755 / 5377).